Reading from the N-terminus, the 262-residue chain is Cutinase 1 (262 aa).

Residue Tyr61 participates in poly(ethylene terephthalate) binding. Ser131 serves as the catalytic Nucleophile. Poly(ethylene terephthalate) contacts are provided by Met132 and Trp156. Catalysis depends on charge relay system residues Asp177 and His209. Cysteines 242 and 260 form a disulfide.

This sequence belongs to the AB hydrolase superfamily.

It localises to the secreted. The protein resides in the periplasm. It catalyses the reaction (ethylene terephthalate)(n) + H2O = (ethylene terephthalate)(n-1) + 4-[(2-hydroxyethoxy)carbonyl]benzoate + H(+). It carries out the reaction a butanoate ester + H2O = an aliphatic alcohol + butanoate + H(+). The enzyme catalyses an acetyl ester + H2O = an aliphatic alcohol + acetate + H(+). The catalysed reaction is cutin + H2O = cutin monomers.. In terms of biological role, catalyzes the hydrolysis of cutin, a polyester that forms the structure of plant cuticle. Shows esterase activity towards p-nitrophenol-linked aliphatic esters (pNP-aliphatic esters). Capable of degrading the plastic poly(ethylene terephthalate) (PET), the most abundant polyester plastic in the world. Capable of degrading the bioplastic poly(lactic acid) (PLLA). This chain is Cutinase 1, found in Thermobifida cellulosilytica.